The following is a 344-amino-acid chain: Protein pelota homolog (344 aa).

Belongs to the eukaryotic release factor 1 family. Pelota subfamily. Monomer. The cofactor is a divalent metal cation.

It localises to the cytoplasm. Functionally, may function in recognizing stalled ribosomes, interact with stem-loop structures in stalled mRNA molecules, and effect endonucleolytic cleavage of the mRNA. May play a role in the release non-functional ribosomes and degradation of damaged mRNAs. Has endoribonuclease activity. This is Protein pelota homolog from Archaeoglobus fulgidus (strain ATCC 49558 / DSM 4304 / JCM 9628 / NBRC 100126 / VC-16).